A 233-amino-acid polypeptide reads, in one-letter code: MADS-box transcription factor 56 (233 aa).

The MADS-box domain occupies Met-1 to Pro-61. The K-box domain occupies Ile-87–Ala-177.

The protein resides in the nucleus. In terms of biological role, probable transcription factor. This is MADS-box transcription factor 56 (MADS56) from Oryza sativa subsp. japonica (Rice).